Consider the following 111-residue polypeptide: uncharacterized protein (111 aa).

Residues 48-70 (LFLVPFPASFTRWLTFLFHLVIY) traverse the membrane as a helical segment.

The protein resides in the membrane. This is an uncharacterized protein from Saccharomyces cerevisiae (strain ATCC 204508 / S288c) (Baker's yeast).